Here is a 224-residue protein sequence, read N- to C-terminus: Large ribosomal subunit protein uL3 (224 aa).

N5-methylglutamine is present on Q159.

Belongs to the universal ribosomal protein uL3 family. In terms of assembly, part of the 50S ribosomal subunit. Forms a cluster with proteins L14 and L19. Post-translationally, methylated by PrmB.

In terms of biological role, one of the primary rRNA binding proteins, it binds directly near the 3'-end of the 23S rRNA, where it nucleates assembly of the 50S subunit. The protein is Large ribosomal subunit protein uL3 of Janthinobacterium sp. (strain Marseille) (Minibacterium massiliensis).